The chain runs to 127 residues: Fluoride-specific ion channel FluC (127 aa).

The next 4 membrane-spanning stretches (helical) occupy residues 4–24, 35–55, 71–91, and 103–123; these read LLLA…LLSM, LGTL…FAWF, TGFC…VFLL, and VFVN…LFSA. 2 residues coordinate Na(+): Gly-75 and Thr-78.

It belongs to the fluoride channel Fluc/FEX (TC 1.A.43) family.

Its subcellular location is the cell inner membrane. It carries out the reaction fluoride(in) = fluoride(out). Its activity is regulated as follows. Na(+) is not transported, but it plays an essential structural role and its presence is essential for fluoride channel function. In terms of biological role, fluoride-specific ion channel. Important for reducing fluoride concentration in the cell, thus reducing its toxicity. The chain is Fluoride-specific ion channel FluC from Escherichia coli (strain K12 / MC4100 / BW2952).